The chain runs to 195 residues: Large ribosomal subunit protein bL25 (195 aa).

Belongs to the bacterial ribosomal protein bL25 family. CTC subfamily. In terms of assembly, part of the 50S ribosomal subunit; part of the 5S rRNA/L5/L18/L25 subcomplex. Contacts the 5S rRNA. Binds to the 5S rRNA independently of L5 and L18.

Functionally, this is one of the proteins that binds to the 5S RNA in the ribosome where it forms part of the central protuberance. The protein is Large ribosomal subunit protein bL25 of Geobacter metallireducens (strain ATCC 53774 / DSM 7210 / GS-15).